The chain runs to 173 residues: RTX-III toxin-activating lysine-acyltransferase ApxIIC (173 aa).

Residues H29 and D98 contribute to the active site.

This sequence belongs to the RTX toxin acyltransferase family. In terms of assembly, homodimer.

It is found in the cytoplasm. The catalysed reaction is a fatty acyl-[ACP] + L-lysyl-[protein] = N(6)-(fatty acyl)-L-lysyl-[protein] + holo-[ACP] + H(+). In terms of biological role, protein-lysine acyltransferase that catalyzes fatty acylation of the protoxin, thereby converting it to the active toxin. This chain is RTX-III toxin-activating lysine-acyltransferase ApxIIC (apxIIIC), found in Actinobacillus pleuropneumoniae (Haemophilus pleuropneumoniae).